A 395-amino-acid polypeptide reads, in one-letter code: Non-structural protein 1 (395 aa).

One can recognise a DRBM domain in the interval 328 to 395 (NYIQLLNEHS…AEQMFRHQCF (68 aa)).

This chain is Non-structural protein 1, found in Homo sapiens (Human).